A 723-amino-acid chain; its full sequence is Probable G-protein coupled receptor 149 (723 aa).

At 1–31 the chain is on the extracellular side; that stretch reads MSVMPSNLSLNGTSFFAENHSIMDKPNEQRT. N-linked (GlcNAc...) asparagine glycosylation is found at N7, N11, and N19. The chain crosses the membrane as a helical span at residues 32-52; sequence LNVFLFCSTFIIAFTVLLGSI. The Cytoplasmic portion of the chain corresponds to 53-69; sequence YSLVSLLKLQNKSTISM. The chain crosses the membrane as a helical span at residues 70-90; that stretch reads IVTSLSIDDLISIVPVIIFML. At 91-106 the chain is on the extracellular side; it reads TQWSSDALPQPLCTTS. A disulfide bridge links C103 with C181. A helical membrane pass occupies residues 107–127; the sequence is ALIYLFQGISSNLKGSLIVSY. The Cytoplasmic portion of the chain corresponds to 128–148; sequence NFYSINKTETMNCSASKRRVS. Residues 149–169 form a helical membrane-spanning segment; the sequence is MVWAILSIWIVSLLICILPLC. The Extracellular portion of the chain corresponds to 170–188; that stretch reads GWGKYIPTTWGCFTDHASS. A helical transmembrane segment spans residues 189–209; the sequence is YILFLFIVYSLCFCLLTVLSV. Residues 210 to 306 are Cytoplasmic-facing; that stretch reads PLTYQLLCSD…SFTVGFAQKR (97 aa). Residues 307–327 form a helical membrane-spanning segment; sequence FSLILALTKVILWLPMMIQMV. Over 328–338 the chain is Extracellular; it reads VQHITGYQSFS. A helical transmembrane segment spans residues 339–359; that stretch reads FETLSFLLTLLAATVTPVFVL. Residues 360 to 723 are Cytoplasmic-facing; the sequence is SEHWIHLPCG…RKREEDGNSN (364 aa). The disordered stretch occupies residues 451 to 513; sequence TTDSARPGPA…ERRLSHEEGH (63 aa). A compositionally biased stretch (basic and acidic residues) spans 501-513; it reads EGPERRLSHEEGH.

Belongs to the G-protein coupled receptor 1 family. Specific expression in peripheral nervous system, including nerve growth factor-dependent sensory and sympathetic neurons, as well as enteric neurons.

It is found in the cell membrane. In terms of biological role, orphan receptor. This is Probable G-protein coupled receptor 149 (GPR149) from Gallus gallus (Chicken).